The sequence spans 635 residues: 1-deoxy-D-xylulose-5-phosphate synthase (635 aa).

Thiamine diphosphate-binding positions include histidine 78 and 119-121 (GHA). Aspartate 150 contributes to the Mg(2+) binding site. Thiamine diphosphate-binding positions include 151 to 152 (GS), asparagine 179, phenylalanine 291, and glutamate 376. Asparagine 179 contributes to the Mg(2+) binding site.

This sequence belongs to the transketolase family. DXPS subfamily. In terms of assembly, homodimer. Mg(2+) is required as a cofactor. It depends on thiamine diphosphate as a cofactor.

It catalyses the reaction D-glyceraldehyde 3-phosphate + pyruvate + H(+) = 1-deoxy-D-xylulose 5-phosphate + CO2. Its pathway is metabolic intermediate biosynthesis; 1-deoxy-D-xylulose 5-phosphate biosynthesis; 1-deoxy-D-xylulose 5-phosphate from D-glyceraldehyde 3-phosphate and pyruvate: step 1/1. In terms of biological role, catalyzes the acyloin condensation reaction between C atoms 2 and 3 of pyruvate and glyceraldehyde 3-phosphate to yield 1-deoxy-D-xylulose-5-phosphate (DXP). The protein is 1-deoxy-D-xylulose-5-phosphate synthase of Chlorobaculum tepidum (strain ATCC 49652 / DSM 12025 / NBRC 103806 / TLS) (Chlorobium tepidum).